A 229-amino-acid polypeptide reads, in one-letter code: 3-dehydroquinate dehydratase (229 aa).

3-dehydroquinate contacts are provided by residues 33–35 (EWR) and Arg65. The active-site Proton donor/acceptor is the His121. Lys146 serves as the catalytic Schiff-base intermediate with substrate. Positions 188, 207, and 211 each coordinate 3-dehydroquinate.

Belongs to the type-I 3-dehydroquinase family. In terms of assembly, homodimer.

The catalysed reaction is 3-dehydroquinate = 3-dehydroshikimate + H2O. It participates in metabolic intermediate biosynthesis; chorismate biosynthesis; chorismate from D-erythrose 4-phosphate and phosphoenolpyruvate: step 3/7. In terms of biological role, involved in the third step of the chorismate pathway, which leads to the biosynthesis of aromatic amino acids. Catalyzes the cis-dehydration of 3-dehydroquinate (DHQ) and introduces the first double bond of the aromatic ring to yield 3-dehydroshikimate. This Lactococcus lactis subsp. cremoris (strain SK11) protein is 3-dehydroquinate dehydratase.